The following is a 555-amino-acid chain: Oxamate carbamoyltransferase subunit AllF (555 aa).

The protein belongs to the AllF family. In terms of assembly, the OXTCase is composed of 3 subunits, AllF, AllG and AllH. Requires Mg(2+) as cofactor.

The catalysed reaction is oxamate + carbamoyl phosphate = N-carbamoyl-2-oxoglycine + phosphate. The protein operates within nitrogen metabolism; (S)-allantoin degradation. Functionally, component of a carbamoyltransferase involved in the anaerobic nitrogen utilization via the assimilation of allantoin. Catalyzes the conversion of oxalurate (N-carbamoyl-2-oxoglycine) to oxamate and carbamoyl phosphate. The sequence is that of Oxamate carbamoyltransferase subunit AllF from Escherichia coli (strain K12).